We begin with the raw amino-acid sequence, 1177 residues long: DNA-directed RNA polymerase subunit beta (1177 aa).

A compositionally biased stretch (acidic residues) spans 1147–1161 (DDTEIEMRDTEDDDD). Residues 1147–1177 (DDTEIEMRDTEDDDDHQSADKLNVEVETTKE) form a disordered region. Residues 1162 to 1177 (HQSADKLNVEVETTKE) are compositionally biased toward basic and acidic residues.

It belongs to the RNA polymerase beta chain family. In terms of assembly, the RNAP catalytic core consists of 2 alpha, 1 beta, 1 beta' and 1 omega subunit. When a sigma factor is associated with the core the holoenzyme is formed, which can initiate transcription.

It catalyses the reaction RNA(n) + a ribonucleoside 5'-triphosphate = RNA(n+1) + diphosphate. In terms of biological role, DNA-dependent RNA polymerase catalyzes the transcription of DNA into RNA using the four ribonucleoside triphosphates as substrates. The chain is DNA-directed RNA polymerase subunit beta from Bacillus anthracis (strain A0248).